Here is a 568-residue protein sequence, read N- to C-terminus: CTP synthase (568 aa).

The segment at 1 to 276 is amidoligase domain; it reads MPQARTIKHV…DAYLVRRLGL (276 aa). Position 18 (serine 18) interacts with CTP. Serine 18 contacts UTP. Residues 19–24 and aspartate 76 each bind ATP; that span reads SLGKGL. Mg(2+) is bound by residues aspartate 76 and glutamate 150. Residues 157 to 159, 197 to 202, and lysine 233 contribute to the CTP site; these read DIE and KTKPTQ. UTP is bound by residues 197 to 202 and lysine 233; that span reads KTKPTQ. The 250-residue stretch at 301–550 folds into the Glutamine amidotransferase type-1 domain; that stretch reads RIALVGKYVD…VNAALEYRAA (250 aa). Residue glycine 364 participates in L-glutamine binding. Cysteine 391 acts as the Nucleophile; for glutamine hydrolysis in catalysis. L-glutamine is bound by residues 392–395, glutamate 415, and arginine 476; that span reads LGLQ. Catalysis depends on residues histidine 523 and glutamate 525.

The protein belongs to the CTP synthase family. Homotetramer.

It carries out the reaction UTP + L-glutamine + ATP + H2O = CTP + L-glutamate + ADP + phosphate + 2 H(+). It catalyses the reaction L-glutamine + H2O = L-glutamate + NH4(+). The catalysed reaction is UTP + NH4(+) + ATP = CTP + ADP + phosphate + 2 H(+). The protein operates within pyrimidine metabolism; CTP biosynthesis via de novo pathway; CTP from UDP: step 2/2. Allosterically activated by GTP, when glutamine is the substrate; GTP has no effect on the reaction when ammonia is the substrate. The allosteric effector GTP functions by stabilizing the protein conformation that binds the tetrahedral intermediate(s) formed during glutamine hydrolysis. Inhibited by the product CTP, via allosteric rather than competitive inhibition. In terms of biological role, catalyzes the ATP-dependent amination of UTP to CTP with either L-glutamine or ammonia as the source of nitrogen. Regulates intracellular CTP levels through interactions with the four ribonucleotide triphosphates. This is CTP synthase from Saccharopolyspora erythraea (strain ATCC 11635 / DSM 40517 / JCM 4748 / NBRC 13426 / NCIMB 8594 / NRRL 2338).